We begin with the raw amino-acid sequence, 944 residues long: 2-oxoglutarate dehydrogenase E1 component (944 aa).

The segment at arginine 914 to asparagine 944 is disordered. A compositionally biased stretch (basic and acidic residues) spans proline 925–valine 936.

This sequence belongs to the alpha-ketoglutarate dehydrogenase family. As to quaternary structure, homodimer. Part of the 2-oxoglutarate dehydrogenase (OGDH) complex composed of E1 (2-oxoglutarate dehydrogenase), E2 (dihydrolipoamide succinyltransferase) and E3 (dihydrolipoamide dehydrogenase); the complex contains multiple copies of the three enzymatic components (E1, E2 and E3). Thiamine diphosphate serves as cofactor.

It catalyses the reaction N(6)-[(R)-lipoyl]-L-lysyl-[protein] + 2-oxoglutarate + H(+) = N(6)-[(R)-S(8)-succinyldihydrolipoyl]-L-lysyl-[protein] + CO2. Functionally, E1 component of the 2-oxoglutarate dehydrogenase (OGDH) complex which catalyzes the decarboxylation of 2-oxoglutarate, the first step in the conversion of 2-oxoglutarate to succinyl-CoA and CO(2). This is 2-oxoglutarate dehydrogenase E1 component from Bacillus subtilis (strain 168).